Reading from the N-terminus, the 735-residue chain is Phosphoribosylformylglycinamidine synthase subunit PurL (735 aa).

Histidine 44 is a catalytic residue. Tyrosine 47 and lysine 86 together coordinate ATP. Glutamate 88 contributes to the Mg(2+) binding site. Substrate contacts are provided by residues 89 to 92 (SHNH) and arginine 111. The active-site Proton acceptor is histidine 90. Aspartate 112 is a Mg(2+) binding site. Glutamine 240 is a substrate binding site. Position 268 (aspartate 268) interacts with Mg(2+). 312 to 314 (ESQ) is a binding site for substrate. 2 residues coordinate ATP: aspartate 496 and glycine 533. Residue asparagine 534 participates in Mg(2+) binding. Residue serine 536 participates in substrate binding.

This sequence belongs to the FGAMS family. Monomer. Part of the FGAM synthase complex composed of 1 PurL, 1 PurQ and 2 PurS subunits.

The protein localises to the cytoplasm. It carries out the reaction N(2)-formyl-N(1)-(5-phospho-beta-D-ribosyl)glycinamide + L-glutamine + ATP + H2O = 2-formamido-N(1)-(5-O-phospho-beta-D-ribosyl)acetamidine + L-glutamate + ADP + phosphate + H(+). Its pathway is purine metabolism; IMP biosynthesis via de novo pathway; 5-amino-1-(5-phospho-D-ribosyl)imidazole from N(2)-formyl-N(1)-(5-phospho-D-ribosyl)glycinamide: step 1/2. In terms of biological role, part of the phosphoribosylformylglycinamidine synthase complex involved in the purines biosynthetic pathway. Catalyzes the ATP-dependent conversion of formylglycinamide ribonucleotide (FGAR) and glutamine to yield formylglycinamidine ribonucleotide (FGAM) and glutamate. The FGAM synthase complex is composed of three subunits. PurQ produces an ammonia molecule by converting glutamine to glutamate. PurL transfers the ammonia molecule to FGAR to form FGAM in an ATP-dependent manner. PurS interacts with PurQ and PurL and is thought to assist in the transfer of the ammonia molecule from PurQ to PurL. This is Phosphoribosylformylglycinamidine synthase subunit PurL from Nitratiruptor sp. (strain SB155-2).